Consider the following 240-residue polypeptide: Splicing factor rtf2 (240 aa).

Disordered regions lie at residues 1–22 (MGNDGGSLPTRNELVKEPGKVP) and 181–240 (SLNK…RVKI). The segment covering 185-210 (ASKKSNKNGDKKRKHVSKSNSKHAKH) has biased composition (basic residues). Basic and acidic residues-rich tracts occupy residues 211-224 (ELRTNRMLDGENVK) and 231-240 (DMERVKRVKI).

It belongs to the rtf2 family. In terms of assembly, interacts with pcn1.

It localises to the nucleus. In terms of biological role, putative splicing factor that is required for the correct splicing of a subset of pre-mRNAs. Required for the correct splicing of rtf1, a replication termination factor that mediates site-specific replication termination at replication barrier RTS1. This is Splicing factor rtf2 from Schizosaccharomyces pombe (strain 972 / ATCC 24843) (Fission yeast).